Reading from the N-terminus, the 89-residue chain is Small ribosomal subunit protein uS15 (89 aa).

Belongs to the universal ribosomal protein uS15 family. In terms of assembly, part of the 30S ribosomal subunit. Forms a bridge to the 50S subunit in the 70S ribosome, contacting the 23S rRNA.

Its function is as follows. One of the primary rRNA binding proteins, it binds directly to 16S rRNA where it helps nucleate assembly of the platform of the 30S subunit by binding and bridging several RNA helices of the 16S rRNA. Forms an intersubunit bridge (bridge B4) with the 23S rRNA of the 50S subunit in the ribosome. The chain is Small ribosomal subunit protein uS15 from Mycobacterium marinum (strain ATCC BAA-535 / M).